The primary structure comprises 93 residues: Sec-independent protein translocase protein TatA (93 aa).

A helical transmembrane segment spans residues 1–21; that stretch reads MGNVFSGWHLLVILLVIVLLF. The tract at residues 49-93 is disordered; sequence DITRSQDGHPDSQGNFAESASSVPFVKSEKQSEKRASVTEAKKSK. Residues 60–70 show a composition bias toward polar residues; it reads SQGNFAESASS. Over residues 75-93 the composition is skewed to basic and acidic residues; that stretch reads KSEKQSEKRASVTEAKKSK.

This sequence belongs to the TatA/E family. In terms of assembly, the Tat system comprises two distinct complexes: a TatABC complex, containing multiple copies of TatA, TatB and TatC subunits, and a separate TatA complex, containing only TatA subunits. Substrates initially bind to the TatABC complex, which probably triggers association of the separate TatA complex to form the active translocon.

Its subcellular location is the cell membrane. Part of the twin-arginine translocation (Tat) system that transports large folded proteins containing a characteristic twin-arginine motif in their signal peptide across membranes. TatA could form the protein-conducting channel of the Tat system. The chain is Sec-independent protein translocase protein TatA from Tropheryma whipplei (strain TW08/27) (Whipple's bacillus).